A 1006-amino-acid chain; its full sequence is Kinesin-like protein KIN-5C (1006 aa).

The Kinesin motor domain occupies Asn9–Ile355. Gly95–Thr102 is an ATP binding site. Residues Ile371 to Arg522 are a coiled coil.

The protein belongs to the TRAFAC class myosin-kinesin ATPase superfamily. Kinesin family. KIN-5/BimC subfamily.

It localises to the cytoplasm. The protein localises to the cytoskeleton. The protein resides in the spindle. Responsible for microtubule translocation. May be important for the organization of phragmoplast-specific arrays of microtubules. Plays an essential role in stabilizing the mitotic spindle. Required during mitotic cytokinesis. This chain is Kinesin-like protein KIN-5C, found in Nicotiana tabacum (Common tobacco).